The following is a 251-amino-acid chain: Flap endonuclease Xni (251 aa).

Asp-104 provides a ligand contact to Mg(2+). Residues 160-250 (VLPRQLPDYW…SGNLQQLRLK (91 aa)) enclose the 5'-3' exonuclease domain. Leu-171, Ala-172, Pro-180, Val-182, and Val-185 together coordinate K(+). An interaction with DNA region spans residues 184–189 (GVGAKT).

The protein belongs to the Xni family. The cofactor is Mg(2+). Requires K(+) as cofactor.

In terms of biological role, has flap endonuclease activity. During DNA replication, flap endonucleases cleave the 5'-overhanging flap structure that is generated by displacement synthesis when DNA polymerase encounters the 5'-end of a downstream Okazaki fragment. In Yersinia pseudotuberculosis serotype I (strain IP32953), this protein is Flap endonuclease Xni.